The following is a 154-amino-acid chain: Aspartate carbamoyltransferase regulatory chain (154 aa).

Residues C109, C114, C138, and C141 each contribute to the Zn(2+) site.

This sequence belongs to the PyrI family. In terms of assembly, contains catalytic and regulatory chains. Zn(2+) is required as a cofactor.

Its function is as follows. Involved in allosteric regulation of aspartate carbamoyltransferase. In Pectobacterium carotovorum subsp. carotovorum (strain PC1), this protein is Aspartate carbamoyltransferase regulatory chain.